The primary structure comprises 856 residues: MESEDLSGRELTIDSIMNKVRDIKNKFKNEDLTDELSLNKISADTTDNSGTVNQIMMMANSPEDWLSLLLKLEKNSVPLSDALLNKLIGRYSQAIEALPPDKYGQNESFARIQVRFAELKAIQEPDDARDYFQMARANCKKFAFVHISFAQFELSQGNVKKSKQLLQEAVERGAVPLEMLEIALRNLNLQKKQLLSEEEKKTLSASMVLTAQESFSSSLGHLQNRNNSCDSRGQTTKARFLYGENMPPQDAEIGYRNSLKQTNKTKQSCPFGRVPVNLLNSPDCDVKTDDSVVPCFIKRQTSRSECRDLVVAGSKPSGNDSCELRNLKSVQNINCKEPLVSDEKSSELIITDSVTLKNKTESSLRAKLEETKEYQEPEVPESNQKQWQSKRKSACINENPVASSNQWQIPELARKVNIEKHTTFEQPVFSVSKQSPPMSASKWFDPKSICKTPSSNTLDDYMSCFRTPVVKNDFPPACQLSTPYGQPACFQQQQQQIPATPLQNLQVLASSSANECISVKGRIYSILKQIGSGGSSKVFQVLNEKKQIYAIKFVNLEEADNQTLDSYRNEIAYLNKLQQHSDKIIRLYDYEITDQYIYMVMECGNIDLNSWLKKKKSIDPWERKSYWKNMLEAVHTIHQHGIVHSDLKPANFLIVDGMLKLIDFGIANQMQPDTTSIVKDSQVGTVNYMPPEAIKDMSSSRENGKSKSKISPKSDVWSLGCILYYMTYGKTPFQHIINQISKLHAIIDPNHEIEFPDIPEKDLQDVLKCCLKRDPKQRISIPELLAHPYVQIQTHPGNQMAKGTTEEMKYVLGQLVGLNSPNSILKAAKTLYEHYSGGESHNSSSSKTFGKKREKK.

Position 1 is an N-acetylmethionine (methionine 1). Serine 7 is modified (phosphoserine). The residue at position 33 (threonine 33) is a Phosphothreonine. Phosphoserine is present on residues serine 37, serine 80, serine 281, serine 317, and serine 321. Threonine 360 is subject to Phosphothreonine. Serine 363 is modified (phosphoserine). A disordered region spans residues 369–392 (EETKEYQEPEVPESNQKQWQSKRK). Residues serine 393, serine 435, and serine 454 each carry the phosphoserine modification. One can recognise a Protein kinase domain in the interval 524–790 (YSILKQIGSG…IPELLAHPYV (267 aa)). Residues 530–538 (IGSGGSSKV) and lysine 552 each bind ATP. The active-site Proton acceptor is aspartate 646. The residue at position 820 (serine 820) is a Phosphoserine. Over residues 835–846 (YSGGESHNSSSS) the composition is skewed to low complexity. Residues 835-856 (YSGGESHNSSSSKTFGKKREKK) form a disordered region.

Belongs to the protein kinase superfamily. Ser/Thr protein kinase family. In terms of assembly, interacts with TPR; the interactions occurs in a microtubule-independent manner. Interacts with MAD1L1 and MAD2L1.

The catalysed reaction is L-seryl-[protein] + ATP = O-phospho-L-seryl-[protein] + ADP + H(+). The enzyme catalyses L-threonyl-[protein] + ATP = O-phospho-L-threonyl-[protein] + ADP + H(+). It catalyses the reaction L-tyrosyl-[protein] + ATP = O-phospho-L-tyrosyl-[protein] + ADP + H(+). With respect to regulation, inhibited by the ATP-competitive kinase inhibitor, SP600125. Functionally, involved in mitotic spindle assembly checkpoint signaling, a process that delays anaphase until chromosomes are bioriented on the spindle, and in the repair of incorrect mitotic kinetochore-spindle microtubule attachments. Phosphorylates MAD1L1 to promote the mitotic spindle assembly checkpoint. Phosphorylates CDCA8/Borealin leading to enhanced AURKB activity at the kinetochore. Phosphorylates SKA3 at 'Ser-34' leading to dissociation of the SKA complex from microtubules and destabilization of microtubule-kinetochore attachments. Phosphorylates KNL1, KNTC1 and autophosphorylates. Phosphorylates MCRS1 which enhances recruitment of KIF2A to the minus end of spindle microtubules and promotes chromosome alignment. The chain is Dual specificity protein kinase TTK (TTK) from Macaca fascicularis (Crab-eating macaque).